Here is a 92-residue protein sequence, read N- to C-terminus: Small ribosomal subunit protein uS19 (92 aa).

It belongs to the universal ribosomal protein uS19 family.

In terms of biological role, protein S19 forms a complex with S13 that binds strongly to the 16S ribosomal RNA. In Rickettsia canadensis (strain McKiel), this protein is Small ribosomal subunit protein uS19.